Reading from the N-terminus, the 340-residue chain is Heat-inducible transcription repressor HrcA (340 aa).

The protein belongs to the HrcA family.

In terms of biological role, negative regulator of class I heat shock genes (grpE-dnaK-dnaJ and groELS operons). Prevents heat-shock induction of these operons. The polypeptide is Heat-inducible transcription repressor HrcA (Burkholderia thailandensis (strain ATCC 700388 / DSM 13276 / CCUG 48851 / CIP 106301 / E264)).